We begin with the raw amino-acid sequence, 338 residues long: Methionine synthase (338 aa).

Zn(2+) contacts are provided by His210, Cys212, Glu234, and Cys294.

This sequence belongs to the archaeal MetE family. Requires Zn(2+) as cofactor.

It participates in amino-acid biosynthesis; L-methionine biosynthesis via de novo pathway. Catalyzes the transfer of a methyl group to L-homocysteine resulting in methionine formation. The physiological methyl donor is unknown. The polypeptide is Methionine synthase (Pyrococcus furiosus (strain ATCC 43587 / DSM 3638 / JCM 8422 / Vc1)).